Here is a 442-residue protein sequence, read N- to C-terminus: C4-dicarboxylate transport protein (442 aa).

The next 8 membrane-spanning stretches (helical) occupy residues 10–30, 40–60, 77–97, 149–169, 185–205, 221–241, 288–308, and 354–374; these read VQVLIAIVLGILVGFLFPSFG, FIKLIKMLIAPIIFATVVSGI, LIYFEVVTTFALVIGLVVANI, LLQVLLISVLFGFALTQLGTL, FVILGFVMRLAPIGAFGAMAF, LMVAFYATCLLFVFVVLGLIA, VVGLVVPAGYSFNLDGTSIYL, and AATLSAVGHVPVAGLALILGI. The tract at residues 420 to 442 is disordered; sequence PATPEVAAEERGEGRGLDGPLPA.

This sequence belongs to the dicarboxylate/amino acid:cation symporter (DAACS) (TC 2.A.23) family.

It is found in the cell membrane. Responsible for the transport of dicarboxylates such as succinate, fumarate, and malate across the membrane. This is C4-dicarboxylate transport protein from Deinococcus geothermalis (strain DSM 11300 / CIP 105573 / AG-3a).